A 417-amino-acid polypeptide reads, in one-letter code: Serpin A9 (417 aa).

The signal sequence occupies residues 1 to 23 (MASYLYGVLFAVGLCAPIYCVSP). N-linked (GlcNAc...) asparagine glycosylation is found at asparagine 101 and asparagine 390.

It belongs to the serpin family. As to expression, highly expressed in normal germinal center (GC) B-cells and GC B-cell-derived malignancies.

It is found in the secreted. It localises to the cytoplasm. The protein resides in the membrane. In terms of biological role, protease inhibitor that inhibits trypsin and trypsin-like serine proteases (in vitro). Inhibits plasmin and thrombin with lower efficiency (in vitro). This Homo sapiens (Human) protein is Serpin A9 (SERPINA9).